The following is a 911-amino-acid chain: Pesticidal crystal protein Cry1Af (911 aa).

It belongs to the delta endotoxin family.

Functionally, promotes colloidosmotic lysis by binding to the midgut epithelial cells of both dipteran and lepidopteran larvae. The chain is Pesticidal crystal protein Cry1Af (cry1Af) from Bacillus thuringiensis.